Here is a 122-residue protein sequence, read N- to C-terminus: Large ribosomal subunit protein uL14 (122 aa).

This sequence belongs to the universal ribosomal protein uL14 family. In terms of assembly, part of the 50S ribosomal subunit. Forms a cluster with proteins L3 and L19. In the 70S ribosome, L14 and L19 interact and together make contacts with the 16S rRNA in bridges B5 and B8.

In terms of biological role, binds to 23S rRNA. Forms part of two intersubunit bridges in the 70S ribosome. This is Large ribosomal subunit protein uL14 from Marinobacter nauticus (strain ATCC 700491 / DSM 11845 / VT8) (Marinobacter aquaeolei).